The chain runs to 417 residues: Serine hydroxymethyltransferase (417 aa).

(6S)-5,6,7,8-tetrahydrofolate is bound by residues Leu-121 and 125-127 (GHL). N6-(pyridoxal phosphate)lysine is present on Lys-229. 355 to 357 (SPF) contributes to the (6S)-5,6,7,8-tetrahydrofolate binding site.

This sequence belongs to the SHMT family. As to quaternary structure, homodimer. Pyridoxal 5'-phosphate serves as cofactor.

It localises to the cytoplasm. The catalysed reaction is (6R)-5,10-methylene-5,6,7,8-tetrahydrofolate + glycine + H2O = (6S)-5,6,7,8-tetrahydrofolate + L-serine. It participates in one-carbon metabolism; tetrahydrofolate interconversion. It functions in the pathway amino-acid biosynthesis; glycine biosynthesis; glycine from L-serine: step 1/1. Its function is as follows. Catalyzes the reversible interconversion of serine and glycine with tetrahydrofolate (THF) serving as the one-carbon carrier. This reaction serves as the major source of one-carbon groups required for the biosynthesis of purines, thymidylate, methionine, and other important biomolecules. Also exhibits THF-independent aldolase activity toward beta-hydroxyamino acids, producing glycine and aldehydes, via a retro-aldol mechanism. The sequence is that of Serine hydroxymethyltransferase from Buchnera aphidicola subsp. Acyrthosiphon pisum (strain 5A).